A 280-amino-acid chain; its full sequence is Phosphonates import ATP-binding protein PhnC (280 aa).

Residues 4 to 239 form the ABC transporter domain; the sequence is ITVTNLHKSY…VIDDIYGNIQ (236 aa). 36–43 lines the ATP pocket; the sequence is GESGAGKS. The segment at 246 to 280 is disordered; it reads GDDANADVAPTTSSDGGTDAAGGPDQQPASDPHLS.

Belongs to the ABC transporter superfamily. Phosphonates importer (TC 3.A.1.9.1) family. In terms of assembly, the complex is composed of two ATP-binding proteins (PhnC), two transmembrane proteins (PhnE) and a solute-binding protein (PhnD).

Its subcellular location is the cell membrane. It catalyses the reaction phosphonate(out) + ATP + H2O = phosphonate(in) + ADP + phosphate + H(+). Functionally, part of the ABC transporter complex PhnCDE involved in phosphonates import. Responsible for energy coupling to the transport system. The protein is Phosphonates import ATP-binding protein PhnC of Halobacterium salinarum (strain ATCC 700922 / JCM 11081 / NRC-1) (Halobacterium halobium).